The chain runs to 132 residues: MTMTDPIADFLTRLRNANTAYHDEVKLPHSKIKANIAEILKREGYIADYRTEDAEVGKTLIVDLKYGPSRERSLAGVRRVSKPGLRVYAKSTNLPKVLGGLGVAIISTSTGLLTDRQAANQGVGGEVLAYVW.

This sequence belongs to the universal ribosomal protein uS8 family. Part of the 30S ribosomal subunit. Contacts proteins S5 and S12.

Its function is as follows. One of the primary rRNA binding proteins, it binds directly to 16S rRNA central domain where it helps coordinate assembly of the platform of the 30S subunit. This chain is Small ribosomal subunit protein uS8, found in Rhodococcus jostii (strain RHA1).